Reading from the N-terminus, the 948-residue chain is FRIGIDA-like protein 5 (948 aa).

The stretch at 47 to 164 (DSTRSVLEER…VEKHRERIVA (118 aa)) forms a coiled coil. Disordered regions lie at residues 447-500 (ESAQ…APSQ), 518-538 (VKES…SGTE), and 804-894 (RNTS…YPSH). Basic and acidic residues-rich tracts occupy residues 459–475 (SYEK…KSEA) and 518–527 (VKESGADHQP). Low complexity predominate over residues 807–817 (SNGSGSGSASS). The segment covering 818-830 (KPDSTIKQSQTAK) has biased composition (polar residues). Basic residues predominate over residues 861–872 (FSKKNKRGKKRS). Over residues 873 to 894 (MSGNNQSSGHIASHTSNHYPSH) the composition is skewed to polar residues.

The protein belongs to the Frigida family. In terms of tissue distribution, expressed at low levels during seed development.

This is FRIGIDA-like protein 5 (FRL5) from Arabidopsis thaliana (Mouse-ear cress).